Consider the following 155-residue polypeptide: Ribosome maturation factor RimP (155 aa).

It belongs to the RimP family.

The protein localises to the cytoplasm. Its function is as follows. Required for maturation of 30S ribosomal subunits. This Deinococcus geothermalis (strain DSM 11300 / CIP 105573 / AG-3a) protein is Ribosome maturation factor RimP.